Reading from the N-terminus, the 369-residue chain is tRNA pseudouridine synthase D (369 aa).

Asp-80 serves as the catalytic Nucleophile. Residues 156–318 enclose the TRUD domain; it reads GIPNWFGEQR…LKQERRALRL (163 aa).

Belongs to the pseudouridine synthase TruD family.

It carries out the reaction uridine(13) in tRNA = pseudouridine(13) in tRNA. Responsible for synthesis of pseudouridine from uracil-13 in transfer RNAs. The sequence is that of tRNA pseudouridine synthase D from Xanthomonas euvesicatoria pv. vesicatoria (strain 85-10) (Xanthomonas campestris pv. vesicatoria).